Reading from the N-terminus, the 367-residue chain is Glutamate 5-kinase (367 aa).

Lys-8 lines the ATP pocket. 3 residues coordinate substrate: Ser-49, Asp-136, and Asn-148. ATP is bound by residues 168-169 and 210-216; these read TD and TGGMATK. One can recognise a PUA domain in the interval 275–353; it reads TGKLLLDAGA…DQIVQILGYE (79 aa).

Belongs to the glutamate 5-kinase family.

It is found in the cytoplasm. It carries out the reaction L-glutamate + ATP = L-glutamyl 5-phosphate + ADP. It functions in the pathway amino-acid biosynthesis; L-proline biosynthesis; L-glutamate 5-semialdehyde from L-glutamate: step 1/2. Functionally, catalyzes the transfer of a phosphate group to glutamate to form L-glutamate 5-phosphate. This Synechococcus elongatus (strain ATCC 33912 / PCC 7942 / FACHB-805) (Anacystis nidulans R2) protein is Glutamate 5-kinase.